A 423-amino-acid polypeptide reads, in one-letter code: Glycine amidinotransferase, mitochondrial (423 aa).

Residues 1–43 constitute a mitochondrion transit peptide; that stretch reads MLRVRCLRGGSRGAEALHYIGSRLGRTVTGWVQRTFQSTQAAT. A phosphoserine mark is found at Ser-46 and Ser-49. Asp-170 is an arginine binding site. Residues Asp-254 and His-303 contribute to the active site. Positions 305, 322, 354, and 355 each coordinate arginine. At Lys-385 the chain carries N6-acetyllysine. The active-site Amidino-cysteine intermediate is Cys-407.

The protein belongs to the amidinotransferase family. As to quaternary structure, homodimer. Kidney. Expressed biallelically in placenta.

The protein localises to the mitochondrion inner membrane. The enzyme catalyses L-arginine + glycine = guanidinoacetate + L-ornithine. The catalysed reaction is 4-aminobutanoate + L-arginine = 4-guanidinobutanoate + L-ornithine. It catalyses the reaction beta-alanine + L-arginine = 3-guanidinopropanoate + L-ornithine. It carries out the reaction taurine + L-arginine = taurocyamine + L-ornithine. The protein operates within amine and polyamine biosynthesis; creatine biosynthesis; creatine from L-arginine and glycine: step 1/2. In terms of biological role, transamidinase that catalyzes the transfer of the amidino group of L-arginine onto the amino moiety of acceptor metabolites such as glycine, beta-alanine, gamma-aminobutyric acid (GABA) and taurine yielding the corresponding guanidine derivatives. Catalyzes the rate-limiting step of creatine biosynthesis, namely the transfer of the amidino group from L-arginine to glycine to generate guanidinoacetate, which is then methylated by GAMT to form creatine. Provides creatine as a source for ATP generation in tissues with high energy demands, in particular skeletal muscle, heart and brain. The protein is Glycine amidinotransferase, mitochondrial (GATM) of Sus scrofa (Pig).